A 360-amino-acid chain; its full sequence is Phospho-N-acetylmuramoyl-pentapeptide-transferase (360 aa).

A run of 10 helical transmembrane segments spans residues 18-38, 73-93, 94-114, 134-154, 168-188, 199-219, 239-259, 263-283, 288-308, and 338-358; these read VFSY…FISL, TMGG…WADL, SNIY…VGFV, YFWQ…IAQG, LLPQ…VGTS, GLAI…AYVT, LVIV…FNTY, VFMG…IAIL, LVLF…ILQV, and VIVR…ATLK.

Belongs to the glycosyltransferase 4 family. MraY subfamily. Requires Mg(2+) as cofactor.

The protein localises to the cell inner membrane. The enzyme catalyses UDP-N-acetyl-alpha-D-muramoyl-L-alanyl-gamma-D-glutamyl-meso-2,6-diaminopimeloyl-D-alanyl-D-alanine + di-trans,octa-cis-undecaprenyl phosphate = di-trans,octa-cis-undecaprenyl diphospho-N-acetyl-alpha-D-muramoyl-L-alanyl-D-glutamyl-meso-2,6-diaminopimeloyl-D-alanyl-D-alanine + UMP. Its pathway is cell wall biogenesis; peptidoglycan biosynthesis. Its function is as follows. Catalyzes the initial step of the lipid cycle reactions in the biosynthesis of the cell wall peptidoglycan: transfers peptidoglycan precursor phospho-MurNAc-pentapeptide from UDP-MurNAc-pentapeptide onto the lipid carrier undecaprenyl phosphate, yielding undecaprenyl-pyrophosphoryl-MurNAc-pentapeptide, known as lipid I. The polypeptide is Phospho-N-acetylmuramoyl-pentapeptide-transferase (Colwellia psychrerythraea (strain 34H / ATCC BAA-681) (Vibrio psychroerythus)).